The following is an 81-amino-acid chain: Small ribosomal subunit protein bS18 (81 aa).

The protein belongs to the bacterial ribosomal protein bS18 family. In terms of assembly, part of the 30S ribosomal subunit. Forms a tight heterodimer with protein bS6.

Functionally, binds as a heterodimer with protein bS6 to the central domain of the 16S rRNA, where it helps stabilize the platform of the 30S subunit. In Desulfotalea psychrophila (strain LSv54 / DSM 12343), this protein is Small ribosomal subunit protein bS18.